A 174-amino-acid polypeptide reads, in one-letter code: Matrix protein (174 aa).

Homomultimer. Interacts with nucleoprotein and with the cytoplasmic domain of glycoprotein.

It localises to the virion membrane. It is found in the host endomembrane system. In terms of biological role, plays a major role in assembly and budding of virion. Completely covers the ribonucleoprotein coil and keep it in condensed bullet-shaped form. Inhibits viral transcription and stimulates replication. This Hordeum vulgare (Barley) protein is Matrix protein (M).